The primary structure comprises 246 residues: Acetoacetate decarboxylase (246 aa).

Catalysis depends on Lys116, which acts as the Schiff-base intermediate with acetoacetate.

Belongs to the ADC family.

The catalysed reaction is acetoacetate + H(+) = acetone + CO2. Its function is as follows. Catalyzes the conversion of acetoacetate to acetone and carbon dioxide. This Burkholderia lata (strain ATCC 17760 / DSM 23089 / LMG 22485 / NCIMB 9086 / R18194 / 383) protein is Acetoacetate decarboxylase.